The following is a 374-amino-acid chain: DNA replication and repair protein RecF (374 aa).

30–37 (GPNAQGKT) is an ATP binding site.

It belongs to the RecF family.

The protein localises to the cytoplasm. Functionally, the RecF protein is involved in DNA metabolism; it is required for DNA replication and normal SOS inducibility. RecF binds preferentially to single-stranded, linear DNA. It also seems to bind ATP. This Lactobacillus johnsonii (strain CNCM I-12250 / La1 / NCC 533) protein is DNA replication and repair protein RecF.